A 109-amino-acid polypeptide reads, in one-letter code: Homeobox protein E60 (109 aa).

The tract at residues 1–31 (PRTRRVKRSDGRGNGGTPEEKRPRTAFSGEQ) is disordered. The segment at residues 20–79 (EKRPRTAFSGEQLARLKREFAENRYLTERRRQQLSRDLGLNEAQIKIWFQNKRAKIKKAS) is a DNA-binding region (homeobox).

This sequence belongs to the engrailed homeobox family.

The protein localises to the nucleus. The sequence is that of Homeobox protein E60 from Apis mellifera (Honeybee).